A 95-amino-acid chain; its full sequence is Small ribosomal subunit protein bS20 (95 aa).

It belongs to the bacterial ribosomal protein bS20 family.

In terms of biological role, binds directly to 16S ribosomal RNA. This chain is Small ribosomal subunit protein bS20, found in Ehrlichia chaffeensis (strain ATCC CRL-10679 / Arkansas).